A 2346-amino-acid chain; its full sequence is Acetyl-CoA carboxylase 1 (2346 aa).

Residue Met1 is modified to N-acetylmethionine. A phosphoserine mark is found at Ser5, Ser23, Ser25, Ser29, Ser34, Ser48, Ser50, and Ser53. The residue at position 58 (Thr58) is a Phosphothreonine. A Phosphoserine modification is found at Ser78. Position 80 is a phosphoserine; by AMPK (Ser80). Residues 117–618 form the Biotin carboxylation domain; it reads VIEKVLIANN…DTGWLDRLIA (502 aa). The region spanning 275–466 is the ATP-grasp domain; the sequence is SKRILNVPQE…LPAAQLQIAM (192 aa). 315–320 is a binding site for ATP; sequence GGGGKG. Mg(2+) contacts are provided by Glu424, Glu437, and Asn439. Mn(2+) is bound by residues Glu424, Glu437, and Asn439. Arg441 is an active-site residue. At Thr610 the chain carries Phosphothreonine. Residues 745–819 form the Biotinyl-binding domain; the sequence is FEKENDPSVL…DPGCVIAKMQ (75 aa). An N6-biotinyllysine modification is found at Lys786. 4 positions are modified to phosphoserine: Ser835, Ser1201, Ser1216, and Ser1218. Thr1227 carries the post-translational modification Phosphothreonine. 3 positions are modified to phosphoserine: Ser1259, Ser1263, and Ser1273. Position 1334 is an N6-acetyllysine (Lys1334). In terms of domain architecture, CoA carboxyltransferase N-terminal spans 1576–1914; the sequence is PYVTKDLLQS…SVYSSVPLLN (339 aa). Residues 1576-2234 are carboxyltransferase; sequence PYVTKDLLQS…EDLVKKKIHN (659 aa). CoA-binding residues include Arg1823, Lys2127, and Arg2129. The CoA carboxyltransferase C-terminal domain occupies 1918–2234; sequence PIDRVIEFVP…EDLVKKKIHN (317 aa). The residue at position 2153 (Thr2153) is a Phosphothreonine.

In terms of assembly, monomer, homodimer, and homotetramer. Can form filamentous polymers. Interacts in its inactive phosphorylated form with the BRCT domains of BRCA1 which prevents ACACA dephosphorylation and inhibits lipid synthesis. Interacts with MID1IP1; interaction with MID1IP1 promotes oligomerization and increases its activity. Mg(2+) is required as a cofactor. It depends on Mn(2+) as a cofactor. Requires biotin as cofactor. Phosphorylation on Ser-1263 is required for interaction with BRCA1. Post-translationally, phosphorylation at Ser-80 by AMPK inactivates enzyme activity. In terms of processing, the biotin cofactor is covalently attached to the central biotinyl-binding domain and is required for the catalytic activity. As to expression, expressed at high levels in mammary gland.

The protein localises to the cytoplasm. It localises to the cytosol. It carries out the reaction hydrogencarbonate + acetyl-CoA + ATP = malonyl-CoA + ADP + phosphate + H(+). The protein operates within lipid metabolism; malonyl-CoA biosynthesis; malonyl-CoA from acetyl-CoA: step 1/1. Its activity is regulated as follows. Inhibited by phosphorylation. Citrate promotes oligomerization of the protein into filaments that correspond to the most active form of the carboxylase. Cytosolic enzyme that catalyzes the carboxylation of acetyl-CoA to malonyl-CoA, the first and rate-limiting step of de novo fatty acid biosynthesis. This is a 2 steps reaction starting with the ATP-dependent carboxylation of the biotin carried by the biotin carboxyl carrier (BCC) domain followed by the transfer of the carboxyl group from carboxylated biotin to acetyl-CoA. The protein is Acetyl-CoA carboxylase 1 of Ovis aries (Sheep).